The chain runs to 205 residues: Large ribosomal subunit protein uL10 (205 aa).

Residues 167-205 (AQGAAPAEAKAEAPASEEKAADTPAEQPAESAPEAAPEA) form a disordered region. 2 stretches are compositionally biased toward low complexity: residues 169–180 (GAAPAEAKAEAP) and 190–205 (PAEQPAESAPEAAPEA).

It belongs to the universal ribosomal protein uL10 family. As to quaternary structure, part of the ribosomal stalk of the 50S ribosomal subunit. The N-terminus interacts with L11 and the large rRNA to form the base of the stalk. The C-terminus forms an elongated spine to which L12 dimers bind in a sequential fashion forming a multimeric L10(L12)X complex.

Its function is as follows. Forms part of the ribosomal stalk, playing a central role in the interaction of the ribosome with GTP-bound translation factors. This is Large ribosomal subunit protein uL10 from Treponema denticola (strain ATCC 35405 / DSM 14222 / CIP 103919 / JCM 8153 / KCTC 15104).